The sequence spans 389 residues: 5-amino-6-(D-ribitylamino)uracil--L-tyrosine 4-hydroxyphenyl transferase (389 aa).

A Radical SAM core domain is found at 56-298 (VSYVINRNIN…QAVARLFFGR (243 aa)). Residues C70, C74, and C77 each coordinate [4Fe-4S] cluster.

The protein belongs to the radical SAM superfamily. CofH family. Consists of two subunits, CofG and CofH. The cofactor is [4Fe-4S] cluster.

The enzyme catalyses 5-amino-6-(D-ribitylamino)uracil + L-tyrosine + S-adenosyl-L-methionine = 5-amino-5-(4-hydroxybenzyl)-6-(D-ribitylimino)-5,6-dihydrouracil + 2-iminoacetate + 5'-deoxyadenosine + L-methionine + H(+). The protein operates within cofactor biosynthesis; coenzyme F0 biosynthesis. Functionally, catalyzes the radical-mediated synthesis of 5-amino-5-(4-hydroxybenzyl)-6-(D-ribitylimino)-5,6-dihydrouracil from 5-amino-6-(D-ribitylamino)uracil and L-tyrosine. This Gloeobacter violaceus (strain ATCC 29082 / PCC 7421) protein is 5-amino-6-(D-ribitylamino)uracil--L-tyrosine 4-hydroxyphenyl transferase.